A 1133-amino-acid polypeptide reads, in one-letter code: Error-prone DNA polymerase (1133 aa).

The protein belongs to the DNA polymerase type-C family. DnaE2 subfamily.

It localises to the cytoplasm. It catalyses the reaction DNA(n) + a 2'-deoxyribonucleoside 5'-triphosphate = DNA(n+1) + diphosphate. Functionally, DNA polymerase involved in damage-induced mutagenesis and translesion synthesis (TLS). It is not the major replicative DNA polymerase. The sequence is that of Error-prone DNA polymerase from Anaeromyxobacter sp. (strain K).